The following is a 250-amino-acid chain: 3-deoxy-manno-octulosonate cytidylyltransferase (250 aa).

This sequence belongs to the KdsB family.

It is found in the cytoplasm. The catalysed reaction is 3-deoxy-alpha-D-manno-oct-2-ulosonate + CTP = CMP-3-deoxy-beta-D-manno-octulosonate + diphosphate. The protein operates within nucleotide-sugar biosynthesis; CMP-3-deoxy-D-manno-octulosonate biosynthesis; CMP-3-deoxy-D-manno-octulosonate from 3-deoxy-D-manno-octulosonate and CTP: step 1/1. Its pathway is bacterial outer membrane biogenesis; lipopolysaccharide biosynthesis. Activates KDO (a required 8-carbon sugar) for incorporation into bacterial lipopolysaccharide in Gram-negative bacteria. This is 3-deoxy-manno-octulosonate cytidylyltransferase from Herminiimonas arsenicoxydans.